Consider the following 321-residue polypeptide: Cytochrome f (321 aa).

A signal peptide spans 1 to 38; it reads MKKNFYTISKTMSRSLKLILFSVFIGFSIFLIPQPTWA. Residues Tyr-39, Cys-59, Cys-62, and His-63 each coordinate heme. Residues 288-308 form a helical membrane-spanning segment; the sequence is VIGMIIFFIGVGLSQIMLVLK.

It belongs to the cytochrome f family. In terms of assembly, the 4 large subunits of the cytochrome b6-f complex are cytochrome b6, subunit IV (17 kDa polypeptide, PetD), cytochrome f and the Rieske protein, while the 4 small subunits are PetG, PetL, PetM and PetN. The complex functions as a dimer. It depends on heme as a cofactor.

It localises to the cellular thylakoid membrane. Its function is as follows. Component of the cytochrome b6-f complex, which mediates electron transfer between photosystem II (PSII) and photosystem I (PSI), cyclic electron flow around PSI, and state transitions. This Prochlorococcus marinus (strain NATL1A) protein is Cytochrome f.